We begin with the raw amino-acid sequence, 61 residues long: Small ribosomal subunit protein uS14 (61 aa).

Zn(2+) contacts are provided by cysteine 24, cysteine 27, cysteine 40, and cysteine 43.

This sequence belongs to the universal ribosomal protein uS14 family. Zinc-binding uS14 subfamily. As to quaternary structure, part of the 30S ribosomal subunit. Contacts proteins S3 and S10. Zn(2+) serves as cofactor.

Functionally, binds 16S rRNA, required for the assembly of 30S particles and may also be responsible for determining the conformation of the 16S rRNA at the A site. This Frankia alni (strain DSM 45986 / CECT 9034 / ACN14a) protein is Small ribosomal subunit protein uS14.